We begin with the raw amino-acid sequence, 280 residues long: Diaminopimelate epimerase (280 aa).

2 residues coordinate substrate: Asn13 and Asn64. Catalysis depends on Cys73, which acts as the Proton donor. Residues 74–75, Asn164, Asn197, and 215–216 contribute to the substrate site; these read GN and ER. Residue Cys224 is the Proton acceptor of the active site. Residue 225–226 participates in substrate binding; that stretch reads GT.

This sequence belongs to the diaminopimelate epimerase family. Homodimer.

The protein localises to the cytoplasm. It catalyses the reaction (2S,6S)-2,6-diaminopimelate = meso-2,6-diaminopimelate. The protein operates within amino-acid biosynthesis; L-lysine biosynthesis via DAP pathway; DL-2,6-diaminopimelate from LL-2,6-diaminopimelate: step 1/1. Functionally, catalyzes the stereoinversion of LL-2,6-diaminopimelate (L,L-DAP) to meso-diaminopimelate (meso-DAP), a precursor of L-lysine and an essential component of the bacterial peptidoglycan. The chain is Diaminopimelate epimerase from Leptospira biflexa serovar Patoc (strain Patoc 1 / Ames).